The sequence spans 157 residues: 2-C-methyl-D-erythritol 2,4-cyclodiphosphate synthase (157 aa).

A divalent metal cation contacts are provided by Asp-8 and His-10. 4-CDP-2-C-methyl-D-erythritol 2-phosphate contacts are provided by residues 8–10 and 34–35; these read DVH and HS. His-42 is a binding site for a divalent metal cation. 4-CDP-2-C-methyl-D-erythritol 2-phosphate-binding positions include 56 to 58, 61 to 65, 100 to 106, 132 to 135, Phe-139, and Arg-142; these read DIG, FPDTD, AQAPKMA, and TTTE.

The protein belongs to the IspF family. As to quaternary structure, homotrimer. The cofactor is a divalent metal cation.

It carries out the reaction 4-CDP-2-C-methyl-D-erythritol 2-phosphate = 2-C-methyl-D-erythritol 2,4-cyclic diphosphate + CMP. It functions in the pathway isoprenoid biosynthesis; isopentenyl diphosphate biosynthesis via DXP pathway; isopentenyl diphosphate from 1-deoxy-D-xylulose 5-phosphate: step 4/6. In terms of biological role, involved in the biosynthesis of isopentenyl diphosphate (IPP) and dimethylallyl diphosphate (DMAPP), two major building blocks of isoprenoid compounds. Catalyzes the conversion of 4-diphosphocytidyl-2-C-methyl-D-erythritol 2-phosphate (CDP-ME2P) to 2-C-methyl-D-erythritol 2,4-cyclodiphosphate (ME-CPP) with a corresponding release of cytidine 5-monophosphate (CMP). The polypeptide is 2-C-methyl-D-erythritol 2,4-cyclodiphosphate synthase (Pseudomonas savastanoi pv. phaseolicola (strain 1448A / Race 6) (Pseudomonas syringae pv. phaseolicola (strain 1448A / Race 6))).